We begin with the raw amino-acid sequence, 150 residues long: 3-hydroxyacyl-[acyl-carrier-protein] dehydratase FabZ (150 aa).

His-54 is a catalytic residue.

Belongs to the thioester dehydratase family. FabZ subfamily.

It is found in the cytoplasm. The enzyme catalyses a (3R)-hydroxyacyl-[ACP] = a (2E)-enoyl-[ACP] + H2O. Functionally, involved in unsaturated fatty acids biosynthesis. Catalyzes the dehydration of short chain beta-hydroxyacyl-ACPs and long chain saturated and unsaturated beta-hydroxyacyl-ACPs. The sequence is that of 3-hydroxyacyl-[acyl-carrier-protein] dehydratase FabZ from Vibrio campbellii (strain ATCC BAA-1116).